The chain runs to 117 residues: Fluoride-specific ion channel FluC 1 (117 aa).

A run of 4 helical transmembrane segments spans residues 1-21 (MIHI…RAWL), 35-55 (IATL…YGIA), 60-80 (LFSL…STLS), and 97-117 (FSYS…GYSI). The Na(+) site is built by Gly-71 and Thr-74.

It belongs to the fluoride channel Fluc/FEX (TC 1.A.43) family.

The protein resides in the cell membrane. It catalyses the reaction fluoride(in) = fluoride(out). Its activity is regulated as follows. Na(+) is not transported, but it plays an essential structural role and its presence is essential for fluoride channel function. In terms of biological role, fluoride-specific ion channel. Important for reducing fluoride concentration in the cell, thus reducing its toxicity. This is Fluoride-specific ion channel FluC 1 from Staphylococcus haemolyticus (strain JCSC1435).